A 194-amino-acid chain; its full sequence is Probable nicotinate-nucleotide adenylyltransferase (194 aa).

Belongs to the NadD family.

The catalysed reaction is nicotinate beta-D-ribonucleotide + ATP + H(+) = deamido-NAD(+) + diphosphate. It participates in cofactor biosynthesis; NAD(+) biosynthesis; deamido-NAD(+) from nicotinate D-ribonucleotide: step 1/1. In terms of biological role, catalyzes the reversible adenylation of nicotinate mononucleotide (NaMN) to nicotinic acid adenine dinucleotide (NaAD). The protein is Probable nicotinate-nucleotide adenylyltransferase of Christiangramia forsetii (strain DSM 17595 / CGMCC 1.15422 / KT0803) (Gramella forsetii).